The chain runs to 144 residues: Large ribosomal subunit protein uL15 (144 aa).

Positions 1–49 (MRLNTLSPAAGSKSAPKRVGRGIGSGLGKTAGRGHKGQKSRSGGGVRVG) are disordered. Residues 21–31 (RGIGSGLGKTA) are compositionally biased toward gly residues.

It belongs to the universal ribosomal protein uL15 family. As to quaternary structure, part of the 50S ribosomal subunit.

Binds to the 23S rRNA. This is Large ribosomal subunit protein uL15 from Shewanella denitrificans (strain OS217 / ATCC BAA-1090 / DSM 15013).